Reading from the N-terminus, the 214-residue chain is Small ribosomal subunit protein uS4c (214 aa).

Composition is skewed to basic residues over residues 1-14 and 36-46; these read MSRYRGPRVKKIKR and LSRPKPKKKSQ. The interval 1-46 is disordered; that stretch reads MSRYRGPRVKKIKRLGSLPGLTTKKPPIVVRDPRKLSRPKPKKKSQ. Residues 92-153 enclose the S4 RNA-binding domain; that stretch reads MRLDNTLFRL…KEKSKALIQN (62 aa).

The protein belongs to the universal ribosomal protein uS4 family. As to quaternary structure, part of the 30S ribosomal subunit. Contacts protein S5. The interaction surface between S4 and S5 is involved in control of translational fidelity.

The protein resides in the plastid. It is found in the chloroplast. Functionally, one of the primary rRNA binding proteins, it binds directly to 16S rRNA where it nucleates assembly of the body of the 30S subunit. In terms of biological role, with S5 and S12 plays an important role in translational accuracy. The polypeptide is Small ribosomal subunit protein uS4c (rps4) (Pelargonium hortorum (Common geranium)).